Consider the following 201-residue polypeptide: Small ribosomal subunit protein uS4c (201 aa).

The interval 20 to 39 (GLTRKTPKSGSNLKKKFHSG) is disordered. In terms of domain architecture, S4 RNA-binding spans 89-150 (MRLDNILFRL…NQRSKRLVQN (62 aa)).

Belongs to the universal ribosomal protein uS4 family. As to quaternary structure, part of the 30S ribosomal subunit. Contacts protein S5. The interaction surface between S4 and S5 is involved in control of translational fidelity.

The protein resides in the plastid. It is found in the chloroplast. In terms of biological role, one of the primary rRNA binding proteins, it binds directly to 16S rRNA where it nucleates assembly of the body of the 30S subunit. Functionally, with S5 and S12 plays an important role in translational accuracy. This is Small ribosomal subunit protein uS4c (rps4) from Oryza nivara (Indian wild rice).